The following is a 316-amino-acid chain: Polyprenyl transferase prhE (316 aa).

A run of 9 helical transmembrane segments spans residues 45–65 (VVGVAYTAAISPVTLPSTFLL), 69–89 (VILSLWGFCIRSAGCAWNDLI), 114–134 (GAALLAAFMFGCGGSLLLLLP), 135–155 (SQCAFEAAIVVFFALLYPFGK), 163–183 (LILTNIAWAIPMAMSSLDMSP), 188–208 (IPTLAMSFSIASVIVMIDIVY), 231–253 (ITDQIAYGLFFSGTLSLLVGGIL), 257–276 (GFPFLIFSVGGHFLGFLRFL), and 296–316 (SCLLATMLLVFGLCFEYCVRL).

This sequence belongs to the UbiA prenyltransferase family. It depends on Mg(2+) as a cofactor.

The protein resides in the membrane. It carries out the reaction 3,5-dimethylorsellinate + (2E,6E)-farnesyl diphosphate = (3R)-3-farnesyl-6-hydroxy-2,3,5-trimethyl-4-oxocyclohexa-1,5-diene-1-carboxylate + diphosphate + H(+). Its pathway is secondary metabolite biosynthesis; terpenoid biosynthesis. Functionally, polyprenyl transferase; part of the gene cluster that mediates the biosynthesis of paraherquonin, a meroterpenoid with a unique, highly congested hexacyclic molecular architecture. The first step of the pathway is the synthesis of 3,5-dimethylorsellinic acid (DMOA) by the polyketide synthase prhL. Synthesis of DMOA is followed by farnesylation by the prenyltransferase prhE, methylesterification by the methyl-transferase prhM, epoxidation of the prenyl chain by the flavin-dependent monooxygenase prhF, and cyclization of the farnesyl moiety by the terpene cyclase prhH, to yield the tetracyclic intermediate, protoaustinoid A. The short chain dehydrogenase prhI then oxidizes the C-3 alcohol group of the terpene cyclase product to transform protoaustinoid A into protoaustinoid B. The FAD-binding monooxygenase prhJ catalyzes the oxidation of protoaustinoid B into preaustinoid A which is further oxidized into preaustinoid A1 by FAD-binding monooxygenase phrK. Finally, prhA leads to berkeleydione via the berkeleyone B intermediate. PrhA is a multifunctional dioxygenase that first desaturates at C5-C6 to form berkeleyone B, followed by rearrangement of the A/B-ring to form the cycloheptadiene moiety in berkeleydione. Berkeleydione serves as the key intermediate for the biosynthesis of paraherquonin as well as many other meroterpenoids. The cytochrome P450 monooxygenases prhB, prhD, and prhN, as well as the isomerase prhC, are probably involved in the late stage of paraherquonin biosynthesis, after the production of berkeleydione. Especially prhC might be a multifunctional enzyme that catalyzes the D-ring expansion via intramolecular methoxy rearrangement, as well as the hydrolysis of the expanded D-ring. The protein is Polyprenyl transferase prhE of Penicillium brasilianum.